A 367-amino-acid polypeptide reads, in one-letter code: Aspartate beta-hydroxylase domain-containing protein 1 (367 aa).

Positions 1-27 (MWRGSSAGGSQGAAMEGTGGELGGQGN) are disordered. Over 1–49 (MWRGSSAGGSQGAAMEGTGGELGGQGNWGLEDAPGLLARASLPIMPAWP) the chain is Cytoplasmic. The chain crosses the membrane as a helical span at residues 50 to 72 (LPLASSALTLLLGALTSLFLWYC). The Lumenal segment spans residues 73–367 (YRLGSQDMQA…ALDFVFAPDP (295 aa)). The interval 88–122 (RAGAVGGRPGGCSEAGRPSPGRSGESGEGPRTEGL) is disordered. Ser-106 is modified (phosphoserine).

Belongs to the aspartyl/asparaginyl beta-hydroxylase family.

It is found in the membrane. The polypeptide is Aspartate beta-hydroxylase domain-containing protein 1 (ASPHD1) (Bos taurus (Bovine)).